Reading from the N-terminus, the 432-residue chain is Patatin-like phospholipase domain-containing protein 5 (432 aa).

Residues 12 to 181 (LSFSGSGYMG…SNNLPFSDCP (170 aa)) form the PNPLA domain. Positions 16–21 (GSGYMG) match the GXGXXG motif. The short motif at 47–51 (GSSSG) is the GXSXG element. Catalysis depends on Ser-49, which acts as the Nucleophile. Asp-168 serves as the catalytic Proton acceptor. The short motif at 168–170 (DGA) is the DGA/G element. Residues 404 to 423 (ADSGLLRQQRGTAPSGNRPL) are disordered.

It carries out the reaction a triacylglycerol + H2O = a diacylglycerol + a fatty acid + H(+). Functionally, has abundant triacylglycerol lipase activity. In Mus musculus (Mouse), this protein is Patatin-like phospholipase domain-containing protein 5.